Consider the following 320-residue polypeptide: Cytochrome f (320 aa).

Positions 1–35 (MENRNTFSWVKEQITRSISVSIMIYVITRTSISNA) are cleaved as a signal peptide. Heme-binding residues include Y36, C56, C59, and H60. Residues 286–305 (VQGLLFFFASVILAQVFLVL) traverse the membrane as a helical segment.

Belongs to the cytochrome f family. The 4 large subunits of the cytochrome b6-f complex are cytochrome b6, subunit IV (17 kDa polypeptide, petD), cytochrome f and the Rieske protein, while the 4 small subunits are PetG, PetL, PetM and PetN. The complex functions as a dimer. Heme is required as a cofactor.

The protein resides in the plastid. Its subcellular location is the chloroplast thylakoid membrane. Component of the cytochrome b6-f complex, which mediates electron transfer between photosystem II (PSII) and photosystem I (PSI), cyclic electron flow around PSI, and state transitions. This chain is Cytochrome f (petA), found in Triticum aestivum (Wheat).